We begin with the raw amino-acid sequence, 128 residues long: Large ribosomal subunit protein eL22 (128 aa).

At T62 the chain carries Phosphothreonine. S66 bears the Phosphoserine mark. K69 is subject to N6-succinyllysine.

The protein belongs to the eukaryotic ribosomal protein eL22 family. In terms of assembly, component of the large ribosomal subunit.

It is found in the cytoplasm. In terms of biological role, component of the large ribosomal subunit. The ribosome is a large ribonucleoprotein complex responsible for the synthesis of proteins in the cell. This Oryctolagus cuniculus (Rabbit) protein is Large ribosomal subunit protein eL22 (RPL22).